The sequence spans 128 residues: Large ribosomal subunit protein mL52 (128 aa).

Residues 1–28 (MLQIAKLCLATSGRITAQRYVAVTTARA) constitute a mitochondrion transit peptide.

Belongs to the mitochondrion-specific ribosomal protein mL52 family. Component of the mitochondrial ribosome large subunit (39S) which comprises a 16S rRNA and about 50 distinct proteins.

The protein localises to the mitochondrion. This Drosophila pseudoobscura pseudoobscura (Fruit fly) protein is Large ribosomal subunit protein mL52 (mRpL52).